Here is a 370-residue protein sequence, read N- to C-terminus: Putative F-box protein At1g46984 (370 aa).

In terms of domain architecture, F-box spans 18 to 64 (YTQLSTLPIDLIIEILSRLPMNSIAICRLVSKQWASILQSSDFTESF).

The sequence is that of Putative F-box protein At1g46984 from Arabidopsis thaliana (Mouse-ear cress).